A 303-amino-acid chain; its full sequence is Nitrogenase iron protein (303 aa).

Residue 11-18 (GKGGIGKS) coordinates ATP. A [4Fe-4S] cluster-binding site is contributed by C112. R115 carries the post-translational modification ADP-ribosylarginine; by dinitrogenase reductase ADP-ribosyltransferase. C147 serves as a coordination point for [4Fe-4S] cluster.

This sequence belongs to the NifH/BchL/ChlL family. In terms of assembly, homodimer. It depends on [4Fe-4S] cluster as a cofactor. In terms of processing, the reversible ADP-ribosylation of Arg-115 inactivates the nitrogenase reductase and regulates nitrogenase activity.

It catalyses the reaction N2 + 8 reduced [2Fe-2S]-[ferredoxin] + 16 ATP + 16 H2O = H2 + 8 oxidized [2Fe-2S]-[ferredoxin] + 2 NH4(+) + 16 ADP + 16 phosphate + 6 H(+). The key enzymatic reactions in nitrogen fixation are catalyzed by the nitrogenase complex, which has 2 components: the iron protein and the molybdenum-iron protein. The chain is Nitrogenase iron protein from Wolinella succinogenes (strain ATCC 29543 / DSM 1740 / CCUG 13145 / JCM 31913 / LMG 7466 / NCTC 11488 / FDC 602W) (Vibrio succinogenes).